Reading from the N-terminus, the 174-residue chain is Alpha-crystallin B chain (174 aa).

Position 1 is an N-acetylmethionine (Met-1). Positions 55–163 constitute a sHSP domain; sequence RMPSWLETGL…PERSIPITRE (109 aa). The Zn(2+) site is built by His-82, His-103, Glu-105, and His-110. The segment at 148–174 is disordered; that stretch reads RKQSDVPERSIPITREEKPAIAGAQRK. Residues 149–166 are compositionally biased toward basic and acidic residues; the sequence is KQSDVPERSIPITREEKP.

This sequence belongs to the small heat shock protein (HSP20) family. In terms of assembly, heteromer composed of three CRYAA and one CRYAB subunits. Aggregates with homologous proteins, including the small heat shock protein HSPB1, to form large heteromeric complexes. Inter-subunit bridging via zinc ions enhances stability, which is crucial as there is no protein turn over in the lens. Lens as well as other tissues.

Its function is as follows. May contribute to the transparency and refractive index of the lens. This is Alpha-crystallin B chain (CRYAB) from Anas platyrhynchos (Mallard).